Consider the following 103-residue polypeptide: Small ribosomal subunit protein uS10 (103 aa).

Belongs to the universal ribosomal protein uS10 family. As to quaternary structure, part of the 30S ribosomal subunit.

Its function is as follows. Involved in the binding of tRNA to the ribosomes. This Shewanella pealeana (strain ATCC 700345 / ANG-SQ1) protein is Small ribosomal subunit protein uS10.